A 1003-amino-acid polypeptide reads, in one-letter code: Alpha-1,4 glucan phosphorylase L isozyme, chloroplastic/amyloplastic (1003 aa).

The transit peptide at 1-64 (MASMTMRFHP…RRRSAFSVKC (64 aa)) directs the protein to the chloroplast. 2 disordered regions span residues 71 to 91 (KQKV…SSFA) and 526 to 593 (SSEE…KKLP). Residues 537–553 (GEEEETSKEGGEEEEEK) show a composition bias toward acidic residues. The segment covering 569-580 (EVEKAIAEKDGT) has biased composition (basic and acidic residues). Lys849 carries the post-translational modification N6-(pyridoxal phosphate)lysine.

This sequence belongs to the glycogen phosphorylase family. It depends on pyridoxal 5'-phosphate as a cofactor. Found predominantly in cotyledons and early seed coat.

The protein localises to the plastid. It is found in the chloroplast. Its subcellular location is the amyloplast. It catalyses the reaction [(1-&gt;4)-alpha-D-glucosyl](n) + phosphate = [(1-&gt;4)-alpha-D-glucosyl](n-1) + alpha-D-glucose 1-phosphate. In terms of biological role, phosphorylase is an important allosteric enzyme in carbohydrate metabolism. Enzymes from different sources differ in their regulatory mechanisms and in their natural substrates. However, all known phosphorylases share catalytic and structural properties. The L isoform exhibits higher affinity for unbranched substrates such as glucan-like amylose and maltodextrin. The chain is Alpha-1,4 glucan phosphorylase L isozyme, chloroplastic/amyloplastic (PHO1) from Vicia faba (Broad bean).